Reading from the N-terminus, the 677-residue chain is Fermitin family homolog 1 (677 aa).

The FERM domain maps to 96-653; sequence MLRLRLPNLK…HEYIGGYIFL (558 aa). Phosphoserine is present on residues serine 170, serine 179, and serine 361. Residues 337-433 form the PH domain; that stretch reads ESEVDEIEAA…EVVPNVNVAE (97 aa).

The protein belongs to the kindlin family. Interacts with the cytoplasmic domain of integrins ITGB1 and ITGB3.

The protein resides in the cytoplasm. The protein localises to the cytoskeleton. Its subcellular location is the cell junction. It localises to the focal adhesion. It is found in the cell projection. The protein resides in the ruffle membrane. Functionally, involved in cell adhesion. Contributes to integrin activation. When coexpressed with talin, potentiates activation of ITGA2B. Required for normal keratinocyte proliferation. Required for normal polarization of basal keratinocytes in skin, and for normal cell shape. Required for normal adhesion of keratinocytes to fibronectin and laminin, and for normal keratinocyte migration to wound sites. This is Fermitin family homolog 1 (FERMT1) from Pongo abelii (Sumatran orangutan).